A 705-amino-acid chain; its full sequence is Gamma-adducin (705 aa).

Residues 1-10 show a composition bias toward polar residues; sequence MSSDTSQAVI. The segment at 1–22 is disordered; the sequence is MSSDTSQAVITTPPPPSMPHKE. S2 is subject to N-acetylserine. Phosphoserine is present on residues S31, S42, S64, S402, S414, S423, S442, and S461. Disordered regions lie at residues 472 to 495, 535 to 556, 572 to 612, and 658 to 705; these read EDPS…VPLN, PSTM…PFSH, KQQG…EENH, and EITI…KVEA. Residue K484 forms a Glycyl lysine isopeptide (Lys-Gly) (interchain with G-Cter in SUMO2) linkage. S583, S585, S590, S672, S676, S678, and S680 each carry phosphoserine. The span at 590 to 605 shows a compositional bias: low complexity; it reads SVSQIQSQTQSPQSVP. Basic residues predominate over residues 681-705; that stretch reads PSKKKKKFRTPSFLKKNKKKEKVEA. Position 682 is a phosphoserine; by PKC (S682). Positions 683–700 are interaction with calmodulin; the sequence is KKKKKFRTPSFLKKNKKK.

Belongs to the aldolase class II family. Adducin subfamily. In terms of assembly, heterodimer of an alpha and a gamma subunit. In terms of processing, sumoylated. Proteolytically cleaved by asparagine endopeptidase (AEP) into 2 fragments. Overexpression of the 1-357 fragment induces neuronal apoptosis, and overexpression of either 1-357 or 358-706 fragment increases the degeneration of dendritic spines. Overexpression of the 1-357 fragment impairs neurite outgrowth by downregulating the expression of Rac2, and induces synaptic dysfunction and cognitive impairments in tau P301S transgenic mice, a mouse model for Alzheimer disease (AD). Expressed in kidney, brain, spleen, liver and heart. In terms of tissue distribution, expressed in renal interlobular arteries, afferent/efferent arterioles, parietal glomerular epithelial cells and microvilli of the luminal surface of the proximal tubule (at protein level). Expressed in podocytes (at protein level) Expressed in renal cortex (at protein level). Expressed in primary vascular smooth muscle cells (VSMCs) of the kidney (at protein level). Expressed in tubular cells and glomeruli (at protein level).

The protein localises to the cytoplasm. Its subcellular location is the cytoskeleton. It localises to the cell membrane. In terms of biological role, membrane-cytoskeleton-associated protein that promotes the assembly of the spectrin-actin network. Plays a role in actin filament capping. Binds to calmodulin. Involved in myogenic reactivity of the renal afferent arteriole (Af-art), renal interlobular arteries and middle cerebral artery (MCA) to increased perfusion pressure. Involved in regulation of potassium channels in the vascular smooth muscle cells (VSMCs) of the Af-art and MCA ex vivo. Involved in regulation of glomerular capillary pressure, glomerular filtration rate (GFR) and glomerular nephrin expression in response to hypertension. Involved in renal blood flow (RBF) autoregulation. Plays a role in podocyte structure and function. Regulates globular monomer actin (G-actin) and filamentous polymer actin (F-actin) ratios in the primary podocytes affecting actin cytoskeleton organization. Regulates expression of synaptopodin, RhoA, Rac1 and CDC42 in the renal cortex and the primary podocytes. Regulates expression of nephrin in the glomeruli and in the primary podocytes, expression of nephrin and podocinin in the renal cortex, and expression of focal adhesion proteins integrin alpha-3 and integrin beta-1 in the glomeruli. Involved in cell migration and cell adhesion of podocytes, and in podocyte foot process effacement. Regulates expression of profibrotics markers MMP2, MMP9, TGF beta-1, tubular tight junction protein E-cadherin, and mesenchymal markers vimentin and alpha-SMA. Promotes the growth of neurites. This is Gamma-adducin (Add3) from Rattus norvegicus (Rat).